The chain runs to 98 residues: C-X-C motif chemokine 10 (98 aa).

Positions 1-21 (MNQTAILICCLVFLTLSGIQG) are cleaved as a signal peptide. A Citrulline modification is found at R26. 2 cysteine pairs are disulfide-bonded: C30/C57 and C32/C74.

This sequence belongs to the intercrine alpha (chemokine CxC) family.

The protein localises to the secreted. Chemotactic for monocytes and T-lymphocytes. Binds to CXCR3. In Macaca nemestrina (Pig-tailed macaque), this protein is C-X-C motif chemokine 10 (CXCL10).